Here is a 345-residue protein sequence, read N- to C-terminus: MLLSLKAATVRFGGRAVLDAVDLDVAEHETVCVLGPSGSGKSTLLRAVAGLQPLDEGQVVLGGRAMDSVPPHKRGVGLMFQDHQLFPQRDVGGNVAFGLRMHGASRSEQEGRVRELLDLVGLPGAARRAVASLSGGEQQRVALARALAPRPRLLMLDEPLGQLDRSLRERLVVELRELFTELGTTVLAVTHDQGEAFALADRVVVMRAGRIAQSGTPLEVWRQPADEFVARFLGFDNVVGATVAGEAADTPWGKVPVPEGSPQGPGTLLVRPAGVRLADATEGLRCTVAARTFRGTHVAVHLQPEDDAPRLEAACALRDAPEPGETVGVAFDVADIVVLGGASGA.

Positions 3 to 233 (LSLKAATVRF…PADEFVARFL (231 aa)) constitute an ABC transporter domain. 35-42 (GPSGSGKS) contacts ATP.

Belongs to the ABC transporter superfamily. Fe(3+) ion importer (TC 3.A.1.10) family. The complex is composed of two ATP-binding proteins (FbpC), two transmembrane proteins (FbpB) and a solute-binding protein (FbpA).

It is found in the cell membrane. It carries out the reaction Fe(3+)(out) + ATP + H2O = Fe(3+)(in) + ADP + phosphate + H(+). Functionally, part of the ABC transporter complex FbpABC involved in Fe(3+) ions import. Responsible for energy coupling to the transport system. The chain is Fe(3+) ions import ATP-binding protein FbpC from Streptomyces avermitilis (strain ATCC 31267 / DSM 46492 / JCM 5070 / NBRC 14893 / NCIMB 12804 / NRRL 8165 / MA-4680).